We begin with the raw amino-acid sequence, 454 residues long: Ornithine aminotransferase (454 aa).

Pyridoxal 5'-phosphate-binding residues include Gly-124, Thr-125, and Gln-267. Position 293 is an N6-(pyridoxal phosphate)lysine (Lys-293). Residue Thr-321 participates in pyridoxal 5'-phosphate binding.

It belongs to the class-III pyridoxal-phosphate-dependent aminotransferase family. In terms of assembly, homotetramer; dimer of dimers. Requires pyridoxal 5'-phosphate as cofactor.

It catalyses the reaction L-ornithine + 2-oxoglutarate = L-glutamate 5-semialdehyde + L-glutamate. The enzyme catalyses L-lysine + 2-oxoglutarate = (S)-2-amino-6-oxohexanoate + L-glutamate. Its function is as follows. Catalyzes the conversion of L-ornithine and 2-oxoglutarate to L-glutamate semialdehyde and L-glutamate. L-ornithine is the best substrate, but the enzyme also shows good activity toward L-lysine, and low activity toward D-ornithine, D-lysine, 5-aminovalerate, 6-aminohexanoate and GABA. The enzyme activity is specific for 2-oxoglutarate. The protein is Ornithine aminotransferase of Pyrococcus horikoshii (strain ATCC 700860 / DSM 12428 / JCM 9974 / NBRC 100139 / OT-3).